A 153-amino-acid polypeptide reads, in one-letter code: ORM1-like protein 1 (153 aa).

At 1–26 (MNVGVAHSEVNPNTRVMNSRGMWLTY) the chain is on the cytoplasmic side. 2 consecutive transmembrane segments (helical) span residues 27–46 (ALGV…FSVP) and 47–64 (VAWT…YVFL). The Cytoplasmic segment spans residues 65-100 (HAVKGTPFETPDQGKARLLTHWEQLDYGVQFTSSRK). A helical transmembrane segment spans residues 101-121 (FFTISPIILYFLASFYTKYDT). Over 122–123 (TH) the chain is Extracellular. The chain crosses the membrane as a helical span at residues 124–140 (FILNTASLLSVLIPKMP). Topologically, residues 141–153 (QLHGVRIFGINKY) are cytoplasmic.

Belongs to the ORM family. In terms of assembly, ceramide-sensitive subunit of the serine palmitoyltransferase (SPT) complex, which is also composed of SPTLC1, SPTLC2/3 and SPTSSA/B.

It localises to the endoplasmic reticulum membrane. Functionally, plays an essential role in the homeostatic regulation of sphingolipid de novo biosynthesis by modulating the activity of the serine palmitoyltransferase (SPT) in response to ceramide levels. When complexed to SPT, the binding of ceramides to its N-terminus stabilizes a conformation that block SPT substrate entry, hence preventing SPT catalytic activity. Through this mechanism, maintains ceramide levels at sufficient concentrations for the production of complex sphingolipids, but which prevents the accumulation of ceramides to levels that trigger apoptosis. The protein is ORM1-like protein 1 (ORMDL1) of Bos taurus (Bovine).